A 249-amino-acid polypeptide reads, in one-letter code: MGQKVNPVGLRLGINRTWDSRWFADGEQYGKLLHQDLAVRAMLKKRLYQAGVSRIIIERPHKKCRVTIYAARPGVIIGKKGADIDKLRKDLSVMTEGEVHLNIVEIRKPETDAQLVAESIAQQLERRIAFRRAMKRSIQSAVRLGAKGIRINVSGRLGGAEIARMEWYREGRVPLHTLRADIDYGFAEAKTTYGIIGVKTWIFKGEVLEHDPMALDKRLATESGPAGEGGGRERGDRPDRGDRGRRDRG.

The KH type-2 domain occupies 39–107 (VRAMLKKRLY…EVHLNIVEIR (69 aa)). The segment at 215–249 (LDKRLATESGPAGEGGGRERGDRPDRGDRGRRDRG) is disordered. Positions 230-249 (GGRERGDRPDRGDRGRRDRG) are enriched in basic and acidic residues.

The protein belongs to the universal ribosomal protein uS3 family. As to quaternary structure, part of the 30S ribosomal subunit. Forms a tight complex with proteins S10 and S14.

Its function is as follows. Binds the lower part of the 30S subunit head. Binds mRNA in the 70S ribosome, positioning it for translation. This Caulobacter sp. (strain K31) protein is Small ribosomal subunit protein uS3.